A 504-amino-acid chain; its full sequence is L-carnitine/gamma-butyrobetaine antiporter (504 aa).

12 helical membrane-spanning segments follow: residues isoleucine 10 to valine 30, tryptophan 51 to phenylalanine 71, isoleucine 92 to isoleucine 112, glycine 143 to valine 163, phenylalanine 195 to valine 215, leucine 231 to leucine 251, serine 263 to methionine 283, tryptophan 316 to alanine 336, leucine 347 to glycine 367, tryptophan 398 to alanine 418, leucine 446 to leucine 466, and alanine 475 to isoleucine 495.

Belongs to the BCCT transporter (TC 2.A.15) family. CaiT subfamily. Homotrimer.

The protein resides in the cell inner membrane. The enzyme catalyses 4-(trimethylamino)butanoate(in) + (R)-carnitine(out) = 4-(trimethylamino)butanoate(out) + (R)-carnitine(in). The protein operates within amine and polyamine metabolism; carnitine metabolism. Its function is as follows. Catalyzes the exchange of L-carnitine for gamma-butyrobetaine. The chain is L-carnitine/gamma-butyrobetaine antiporter from Escherichia coli (strain ATCC 8739 / DSM 1576 / NBRC 3972 / NCIMB 8545 / WDCM 00012 / Crooks).